We begin with the raw amino-acid sequence, 190 residues long: Potassium-transporting ATPase KdpC subunit (190 aa).

The chain crosses the membrane as a helical span at residues 6–26 (PAVFLVLLLTLITGLLYPLLT). Residues 67–88 (GRPSATSDRPYNPLASSGSNLA) are disordered. Residues 69 to 88 (PSATSDRPYNPLASSGSNLA) show a composition bias toward polar residues.

Belongs to the KdpC family. As to quaternary structure, the system is composed of three essential subunits: KdpA, KdpB and KdpC.

It is found in the cell inner membrane. Part of the high-affinity ATP-driven potassium transport (or Kdp) system, which catalyzes the hydrolysis of ATP coupled with the electrogenic transport of potassium into the cytoplasm. This subunit acts as a catalytic chaperone that increases the ATP-binding affinity of the ATP-hydrolyzing subunit KdpB by the formation of a transient KdpB/KdpC/ATP ternary complex. This chain is Potassium-transporting ATPase KdpC subunit, found in Erwinia tasmaniensis (strain DSM 17950 / CFBP 7177 / CIP 109463 / NCPPB 4357 / Et1/99).